Consider the following 308-residue polypeptide: 50 kDa gamma-zein (308 aa).

Residues 1-19 (MKLVLVVLAFIALVSSVSC) form the signal peptide. Residues 27 to 159 (CGQQQSHEQQ…QPQQPQQYQQ (133 aa)) are disordered. The segment covering 55–119 (HHQQQQHQQQ…QHHQQSQGHV (65 aa)) has biased composition (low complexity). Positions 120-129 (QQHEQSHEQH) are enriched in basic and acidic residues. Positions 130-159 (QGQSHEQQHQQQFQGHDKQQQPQQPQQYQQ) are enriched in low complexity. A lipid anchor (GPI-anchor amidated cysteine) is attached at Cys-286. Positions 287–308 (GLYHSYYQNNPCSSNDISGVCN) are cleaved as a propeptide — removed in mature form.

The protein belongs to the gliadin/glutenin family. In terms of assembly, interacts with OP10 (via N-terminus).

The protein resides in the cell membrane. Its function is as follows. Zeins are major seed storage proteins. This Zea mays (Maize) protein is 50 kDa gamma-zein.